The sequence spans 419 residues: MADLQGRKVFKVFNQDFIVDERYTVTKELGQGAYGIVCAAVNNQTNEGVAIKKVTNVFSKKILAKRALREIKLLQHFRGHRNITCLYDMDIPRPDNFNETYLYEELMECDLAAIIRSGQPLTDAHFQSFIYQILCGLKYIHSANVLHRDLKPGNLLVNADCELKICDFGLARGFSIDPEENAGYMTEYVATRWYRAPEIMLSFQSYTKAIDVWSVGCILAELLGGRPFFKGRDYVDQLNQILHILGTPNEETLSRIGSPRAQEYVRNLPFMPKKPFAALFPNANPDALDLLDRMLAFDPSSRISVEEALEHPYLQIWHDASDEPDCPTTFNFDFEIVEDVGDMRKMILEEVFRFRQVVRTVAGENGGQQAGQQPGAGQVPMPSGGQGQWRTEDPRPEEYMGHNANGLEGELALGADGRR.

One can recognise a Protein kinase domain in the interval 23–314; sequence YTVTKELGQG…VEEALEHPYL (292 aa). Residues 29-37 and Lys52 contribute to the ATP site; that span reads LGQGAYGIV. The active-site Proton acceptor is Asp149.

The protein belongs to the protein kinase superfamily. Ser/Thr protein kinase family. MAP kinase subfamily. Requires Mg(2+) as cofactor. Post-translationally, phosphorylated by the MAP kinase kinase mkk1.

It catalyses the reaction L-seryl-[protein] + ATP = O-phospho-L-seryl-[protein] + ADP + H(+). The enzyme catalyses L-threonyl-[protein] + ATP = O-phospho-L-threonyl-[protein] + ADP + H(+). In terms of biological role, mitogen-activated protein kinase, part of the mkh1-mkk1-spm1 MAPK cascade that regulates vegetative growth, conidial formation, colony surface hydrophobicity, osmotic stress, cell wall integrity maintenance, carbon and nitrogen source utilization, chitin distribution, septa formation, and pathogenicity. The chain is Mitogen-activated protein kinase spm1 from Cytospora mali (Apple Valsa canker fungus).